A 361-amino-acid chain; its full sequence is L-threonine 3-dehydrogenase (361 aa).

Residue C38 coordinates Zn(2+). Active-site charge relay system residues include T40 and H43. H63, E64, C93, C96, C99, and C107 together coordinate Zn(2+). Residues I175, D195, R200, 262–264 (LGI), and 286–287 (IY) contribute to the NAD(+) site.

This sequence belongs to the zinc-containing alcohol dehydrogenase family. As to quaternary structure, homotetramer. Zn(2+) is required as a cofactor.

It localises to the cytoplasm. The catalysed reaction is L-threonine + NAD(+) = (2S)-2-amino-3-oxobutanoate + NADH + H(+). Its pathway is amino-acid degradation; L-threonine degradation via oxydo-reductase pathway; glycine from L-threonine: step 1/2. In terms of biological role, catalyzes the NAD(+)-dependent oxidation of L-threonine to 2-amino-3-ketobutyrate. The polypeptide is L-threonine 3-dehydrogenase (Pectobacterium atrosepticum (strain SCRI 1043 / ATCC BAA-672) (Erwinia carotovora subsp. atroseptica)).